Reading from the N-terminus, the 103-residue chain is Large ribosomal subunit protein bL21 (103 aa).

Belongs to the bacterial ribosomal protein bL21 family. Part of the 50S ribosomal subunit. Contacts protein L20.

This protein binds to 23S rRNA in the presence of protein L20. The chain is Large ribosomal subunit protein bL21 from Vibrio parahaemolyticus serotype O3:K6 (strain RIMD 2210633).